Reading from the N-terminus, the 176-residue chain is Large ribosomal subunit protein uL6 (176 aa).

Basic and acidic residues predominate over residues 151–170 (RPPEPYKGKGVRYADEQVRR). The segment at 151–176 (RPPEPYKGKGVRYADEQVRRKEAKKK) is disordered.

It belongs to the universal ribosomal protein uL6 family. In terms of assembly, part of the 50S ribosomal subunit.

Its function is as follows. This protein binds to the 23S rRNA, and is important in its secondary structure. It is located near the subunit interface in the base of the L7/L12 stalk, and near the tRNA binding site of the peptidyltransferase center. This Shewanella loihica (strain ATCC BAA-1088 / PV-4) protein is Large ribosomal subunit protein uL6.